The primary structure comprises 347 residues: MESPASSQPASMPQSKGKSKRKKDLRISCMSKPPAPNPTPPRNLDSRTFITIGDRNFEVEADDLVTISELGRGAYGVVEKVRHAQSGTIMAVKRIRATVNSQEQKRLLMDLDINMRTVDCFYTVTFYGALFREGDVWICMELMDTSLDKFYRKVLDKNMTIPEDILGEIAVSIVRALEHLHSKLSVIHRDVKPSNVLINKEGHVKMCDFGISGYLVDSVAKTMDAGCKPYMAPERINPELNQKGYNVKSDVWSLGITMIEMAILRFPYESWGTPFQQLKQVVEEPSPQLPADRFSPEFVDFTAQCLRKNPAERMSYLELMEHPFFTLHKTKKTDIAAFVKEILGEDS.

An N-acetylmethionine modification is found at Met-1. Positions Met-1 to Ser-15 are enriched in low complexity. The disordered stretch occupies residues Met-1–Ser-46. Phosphoserine occurs at positions 3 and 15. Positions Leu-64–Phe-325 constitute a Protein kinase domain. Residues Leu-70 to Val-78 and Lys-93 each bind ATP. Asp-190 (proton acceptor) is an active-site residue. Residue Ser-218 is modified to Phosphoserine. Thr-222 carries the phosphothreonine modification.

The protein belongs to the protein kinase superfamily. STE Ser/Thr protein kinase family. MAP kinase kinase subfamily. In terms of assembly, component of a signaling complex containing at least AKAP13, PKN1, MAPK14, ZAK and MAP2K3. Within this complex, AKAP13 interacts directly with PKN1, which in turn recruits MAPK14, MAP2K3 and ZAK. Binds to DYRK1B/MIRK and increases its kinase activity. Part of a complex with MAP3K3, RAC1 and CCM2. Interacts with ARRB1. As to quaternary structure, (Microbial infection) Interacts with Yersinia YopJ. In terms of processing, autophosphorylated. Phosphorylation on Ser-218 and Thr-222 by MAP kinase kinase kinases positively regulates the kinase activity. Phosphorylated by TAOK2. Post-translationally, (Microbial infection) Yersinia YopJ may acetylate Ser/Thr residues, preventing phosphorylation and activation, thus blocking the MAPK signaling pathway. In terms of tissue distribution, abundant expression is seen in the skeletal muscle. It is also widely expressed in other tissues.

It carries out the reaction L-seryl-[protein] + ATP = O-phospho-L-seryl-[protein] + ADP + H(+). The catalysed reaction is L-threonyl-[protein] + ATP = O-phospho-L-threonyl-[protein] + ADP + H(+). It catalyses the reaction L-tyrosyl-[protein] + ATP = O-phospho-L-tyrosyl-[protein] + ADP + H(+). Its activity is regulated as follows. Activated by dual phosphorylation on Ser-218 and Thr-222. In terms of biological role, dual specificity kinase. Is activated by cytokines and environmental stress in vivo. Catalyzes the concomitant phosphorylation of a threonine and a tyrosine residue in the MAP kinase p38. Part of a signaling cascade that begins with the activation of the adrenergic receptor ADRA1B and leads to the activation of MAPK14. This Homo sapiens (Human) protein is Dual specificity mitogen-activated protein kinase kinase 3 (MAP2K3).